Here is a 314-residue protein sequence, read N- to C-terminus: 3'-5' exoribonuclease YhaM (314 aa).

The segment at residues 14 to 90 is a DNA-binding region (OB); that stretch reads VDLYLLIKSS…QLKLRNIRPA (77 aa). Residues 163–279 form the HD domain; the sequence is HVVSMLNLAK…LHYIDNLDAK (117 aa).

The protein belongs to the YhaM family.

In terms of biological role, shows a 3'-5' exoribonuclease activity. This Bacillus licheniformis (strain ATCC 14580 / DSM 13 / JCM 2505 / CCUG 7422 / NBRC 12200 / NCIMB 9375 / NCTC 10341 / NRRL NRS-1264 / Gibson 46) protein is 3'-5' exoribonuclease YhaM.